The primary structure comprises 500 residues: Lysine--tRNA ligase (500 aa).

Residues Glu410 and Glu417 each contribute to the Mg(2+) site.

It belongs to the class-II aminoacyl-tRNA synthetase family. Homodimer. Requires Mg(2+) as cofactor.

It is found in the cytoplasm. The enzyme catalyses tRNA(Lys) + L-lysine + ATP = L-lysyl-tRNA(Lys) + AMP + diphosphate. The polypeptide is Lysine--tRNA ligase (Shewanella oneidensis (strain ATCC 700550 / JCM 31522 / CIP 106686 / LMG 19005 / NCIMB 14063 / MR-1)).